Here is a 1933-residue protein sequence, read N- to C-terminus: MAQGSRRRKVVLTAGAEGCSSSSGPDMEELLRCAERDLNIDARQLALAPGGTHVVALVSTRWLASLRERRLGPCPRAEGLGEAEVRTLLQRSVQRLPQGWTRVEVHGLRKRRLSYPLSRVLPFEEGSCSPETLTRFMQEVAAQNYRNLWRHAYHTYGQPYSHSTAPSAIPALDSIRQALQRVYGCTFLPVGESMQCLSNVRDGPSRGSSACPSLLRAEALLESPEMLYVVHPYVQFSLHDVVTFSPAKLTNSQAKVLFILFRVLRAMDACHRQGLACGALSLHHIAVDEKLCSELRLDLSAYEMPSEDENQEVSEEKDRTGVKSEKDGEGRPGCPTCQKELRGLVLDWVHGRVSNFYYLMQLNRLAGRRQGDPNYHPVLPWVVDFTTPYGRFRDLRKSKFRLNKGDKQLDFTYEMTRQAFVAGGAGSGEPLHVPHHISDVLSDITYYVYKARRTPRSVLCGHVRAQWEPHEYPATMERMQTWTPDECIPEFYTDPSIFCSIHPDMPDLDVPAWCSSNQEFVTAHRALLESWEVSQDLHHWIDLTFGYKLQGKEAVKEKNVCLHLVDAHTHLTSYGVVQLFDQPHPQRLAGAPALAPEPPLIPRLLVQPIQEATGQEDISGQLINGAGRHVVEVTPCESGWTRERPTAGEDDLEQATEALDSISIPGKAGDQPGSSSSQASPGLLPFSAPSGSRPGRRSKATGLDSGEGDEGKIVLPEGFSPIQALEELEKVGNFLARGLGSQLEEPEKPQAQPPVYLQSLFHRDMQVLGVLLAEMVFATRVRILQPDAPLWVRFEAVRGLCTRHSKDIPVSLQPVLDTLLQLSGPKSPLVVKKGKLDPLFEYRPVSQGLPPPSPAQLLSPFSSVVPFPTYFPALHKFILLYQARRVEDEVQGRELVFALWQQLGAVLNEITPEGLEILLPFVLSLMSEEHTAVYTAWYLFEPVAKALGPKNTIKYLLKPLIGAYENPCRLHGRFYLYTDCFVAQLVVRLGLQAFLIHLLPHVLQVLAGVEASQEEGKGLVGTTEDEENELPVPGPGSCAFGEEIQMGGQPAASSGLGLPDYRSGVSFHDQADLPDTEDFQAGLYVAESPQPQEAEAVSLGQLSDKSSTSEASQGEERGGDDGGAPVDKNSVKSGDSSQDLKQSEGSEEEEEEEEGCVVLEEEEQDEVTGTSELTLSDTILSMETVVAPGDGRDREEEEEPLPEQTEGKEQKILLDTACKMVRWLSAKLGPTVASRHVARNLLRLLTSCYVGPTRQQFTVSCDDSPPLNAGNIYQKRPVLGDIVSGPVLSCLLHIAHLYGEPVLTYQYLPYISYLVAPGSNSSPSRLNSRKEAGLLAAVTLTQKIIVYLSDTTLMDILPRISHEVLLPVLSFLTSFVTGFPSGAQARTVLCVKTISLIALICLRIGQEMVQQHLSEPVATFFQVFSHLHELRQQDLQLDLKGCTEGQLPEATFSDGQRRPVDPTLLEELQKVFTLEMAYTIYVPFSCLLGDIIRKIIPNHELVGELAGLYLESMSPSSLRNPASMEPVTPSAGPEWNPQSGSCLQDDGHSGTFGSVLVGNRIQIPDSQPQSSGPLGSISGVGSGGLSSRNEDNALKRELPRSAHGLSGNWLAYWQYEIGVSQQDAHFHFHQIRLQSFPGHTGAVKCVAALSSEDFFLSGSKDRTVRLWPLYNYGDGTSETAPRLIYAQHRKSVFYVGQLEAPQYVVSCDGAVHVWDPFTGKTLRTVDPSDSRVPLTAVAVMPAPHTSITMASSDSTLRFVDCRKPGLQHEFRLGGGLNPGLVRSLAVSPSGRSVVAGFSSGFMVLLDTRTGLVLRGWPAHEGDILQIKAVEGSVIVSSSSDHSLTVWKELEQKPTHHYKSASDPIHTFDLYGSEVVTGTVANKIGVCSLLEPPSQATTKLSSENFRGTLTSLALLPTKRHLLLGSDNGIIRLLA.

Residues Met-1–Glu-643 are necessary and sufficient for the interaction with SQSTM1. Disordered regions lie at residues Pro-305 to Cys-334, Ser-663 to Val-714, Cys-1038 to Gly-1057, Gln-1090 to Glu-1209, Ser-1517 to Gln-1544, and Asp-1565 to Glu-1590. The segment covering Ser-314–Gly-330 has biased composition (basic and acidic residues). One can recognise a BEACH domain in the interval Gly-333 to Gln-610. Positions Ala-668 to Arg-693 are enriched in low complexity. 2 stretches are compositionally biased toward polar residues: residues Gly-1100–Ser-1112 and Val-1131–Leu-1140. A compositionally biased stretch (acidic residues) spans Gly-1145–Glu-1166. WD repeat units follow at residues Gly-1638 to Ser-1677, Ile-1684 to Thr-1724, Leu-1776 to Gly-1815, Ala-1818 to His-1856, and Asn-1903 to Ala-1933.

Belongs to the WD repeat WDR81 family. In terms of assembly, interacts with WDR91; involved in early to late endosome cargo transport. Interacts with BECN1; negatively regulates the PI3 kinase/PI3K activity associated with endosomal membranes. Interacts with SQSTM1; the interaction is direct and regulates the interaction of SQSTM1 with ubiquitinated proteins. Interacts with MAP1LC3C; recruits MAP1LC3C to ubiquitinated protein aggregates in the aggrephagy process.

It is found in the early endosome membrane. It localises to the late endosome membrane. The protein localises to the lysosome membrane. Its subcellular location is the cytoplasmic vesicle. The protein resides in the autophagosome membrane. It is found in the mitochondrion. It localises to the cytoplasm. The protein localises to the cytosol. Functionally, functions as a negative regulator of the PI3 kinase/PI3K activity associated with endosomal membranes via BECN1, a core subunit of the PI3K complex. By modifying the phosphatidylinositol 3-phosphate/PtdInsP3 content of endosomal membranes may regulate endosome fusion, recycling, sorting and early to late endosome transport. It is for instance, required for the delivery of cargos like BST2/tetherin from early to late endosome and thereby participates indirectly to their degradation by the lysosome. May also play a role in aggrephagy, the macroautophagic degradation of ubiquitinated protein aggregates. In this process, may regulate the interaction of SQSTM1 with ubiquitinated proteins and also recruit MAP1LC3C. May also be involved in maintenance of normal mitochondrial structure and organization. The chain is WD repeat-containing protein 81 from Rattus norvegicus (Rat).